A 170-amino-acid polypeptide reads, in one-letter code: MKNFNGKLILIGLMGAGKTTLGRQMAQRLDYRFYDSDHEIAAAAGVPIPTIFEMEGEQGFRSRETAILKKLVILPHIVLSTGGGAVLKEENRALIRKSGTVVYLHAPPETLLERTRCDNSRPLLQVADPLAKLRELYAARDPVYRQTADFTVESANCRETVQTLLKRLSR.

15-20 (GAGKTT) is an ATP binding site. Mg(2+) is bound at residue Thr-19. Positions 37, 61, and 83 each coordinate substrate. Residue Arg-121 participates in ATP binding. Arg-140 lines the substrate pocket.

This sequence belongs to the shikimate kinase family. As to quaternary structure, monomer. Requires Mg(2+) as cofactor.

The protein localises to the cytoplasm. It catalyses the reaction shikimate + ATP = 3-phosphoshikimate + ADP + H(+). The protein operates within metabolic intermediate biosynthesis; chorismate biosynthesis; chorismate from D-erythrose 4-phosphate and phosphoenolpyruvate: step 5/7. Its function is as follows. Catalyzes the specific phosphorylation of the 3-hydroxyl group of shikimic acid using ATP as a cosubstrate. The chain is Shikimate kinase from Neisseria meningitidis serogroup C (strain 053442).